A 670-amino-acid polypeptide reads, in one-letter code: DNA ligase (670 aa).

Residues aspartate 33–aspartate 37, serine 82–leucine 83, and glutamate 114 each bind NAD(+). Lysine 116 serves as the catalytic N6-AMP-lysine intermediate. NAD(+)-binding residues include arginine 137, glutamate 174, lysine 291, and lysine 315. Residues cysteine 409, cysteine 412, cysteine 427, and cysteine 433 each coordinate Zn(2+). One can recognise a BRCT domain in the interval glycine 593–lysine 670.

Belongs to the NAD-dependent DNA ligase family. LigA subfamily. The cofactor is Mg(2+). It depends on Mn(2+) as a cofactor.

It catalyses the reaction NAD(+) + (deoxyribonucleotide)n-3'-hydroxyl + 5'-phospho-(deoxyribonucleotide)m = (deoxyribonucleotide)n+m + AMP + beta-nicotinamide D-nucleotide.. Its function is as follows. DNA ligase that catalyzes the formation of phosphodiester linkages between 5'-phosphoryl and 3'-hydroxyl groups in double-stranded DNA using NAD as a coenzyme and as the energy source for the reaction. It is essential for DNA replication and repair of damaged DNA. The polypeptide is DNA ligase (Vibrio campbellii (strain ATCC BAA-1116)).